The sequence spans 1112 residues: Rho GTPase-activating protein 7 (1112 aa).

One can recognise an SAM domain in the interval 37–104; that stretch reads LAEIEAKEAC…LNKCAVMKLE (68 aa). 3 positions are modified to phosphoserine: Ser-112, Ser-115, and Ser-155. 4 disordered regions span residues 146–203, 318–350, 405–459, and 512–574; these read SPKQ…APAR, RSIS…RTRS, PKAL…VSSR, and SDEG…GVGA. The segment covering 183 to 193 has biased composition (polar residues); sequence VHSTGSLTTHA. Residues 296–468 form a focal adhesion-targeting (FAT) region; it reads QLNCVEISAL…RLSIYDNVPG (173 aa). Composition is skewed to low complexity over residues 320–348 and 409–423; these read ISSS…VTRT and SNGS…SSVN. The residue at position 343 (Ser-343) is a Phosphoserine. Residues 437–446 are compositionally biased toward basic and acidic residues; it reads LRRENSSPKE. Over residues 520–532 the composition is skewed to polar residues; that stretch reads ALDSVSPCPSSPK. A compositionally biased stretch (basic and acidic residues) spans 534-544; sequence IHLDVDNDRAT. Positions 547 to 556 are enriched in polar residues; the sequence is DLDSTGNSLN. Positions 635-657 are polybasic cluster (PBR); that stretch reads KHGFSWAVPKFMKRIKVPDYKDR. A Rho-GAP domain is found at 662-868; that stretch reads VPLTVNVQRT…HMIAECKKLF (207 aa). An START domain is found at 898–1105; that stretch reads CNDDSADYQH…RDSFSHQNTE (208 aa).

In terms of assembly, interacts with EF1A1, facilitates EF1A1 distribution to the membrane periphery and ruffles upon growth factor stimulation and suppresses cell migration. Interacts with tensin TNS1 (via N-terminus); the interaction is decreased by phosphorylation of TNS1. Interacts with TNS3 and PTEN; in resting cells, interacts with TNS3 (via C2 tensin-type domain) but, following growth factor stimulation, TNS3 and PTEN are phosphorylated which leads to weakened interaction with TNS3 and enhanced interaction with PTEN. Interacts (via C-terminus) with tensin TNS4 (via SH2 domain); the interaction is independent of tyrosine phosphorylation of DLC1.

Its subcellular location is the cytoplasm. The protein localises to the cell junction. It localises to the focal adhesion. The protein resides in the membrane. Its function is as follows. Functions as a GTPase-activating protein for the small GTPases RHOA, RHOB, RHOC and CDC42, terminating their downstream signaling. This induces morphological changes and detachment through cytoskeletal reorganization, playing a critical role in biological processes such as cell migration and proliferation. Also functions in vivo as an activator of the phospholipase PLCD1. Active DLC1 increases cell migration velocity but reduces directionality. Required for growth factor-induced epithelial cell migration; in resting cells, interacts with TNS3 while PTEN interacts with the p85 regulatory subunit of the PI3K kinase complex but growth factor stimulation induces phosphorylation of TNS3 and PTEN, causing them to change their binding preference so that PTEN interacts with DLC1 and TNS3 interacts with p85. The PTEN-DLC1 complex translocates to the posterior of migrating cells to activate RHOA while the TNS3-p85 complex translocates to the leading edge of migrating cells to promote RAC1 activation. The protein is Rho GTPase-activating protein 7 (DLC1) of Bos taurus (Bovine).